The sequence spans 208 residues: Large ribosomal subunit protein uL4 (208 aa).

The segment at 45–89 (RQGTHAHKNRSAVSGGGKKPWRQKGTGRARQGSTRSPQWRGGGTV) is disordered.

This sequence belongs to the universal ribosomal protein uL4 family. As to quaternary structure, part of the 50S ribosomal subunit.

In terms of biological role, one of the primary rRNA binding proteins, this protein initially binds near the 5'-end of the 23S rRNA. It is important during the early stages of 50S assembly. It makes multiple contacts with different domains of the 23S rRNA in the assembled 50S subunit and ribosome. Forms part of the polypeptide exit tunnel. This Lactococcus lactis subsp. cremoris (strain MG1363) protein is Large ribosomal subunit protein uL4.